A 1645-amino-acid polypeptide reads, in one-letter code: Protein MON2 homolog (1645 aa).

It belongs to the MON2 family.

Its function is as follows. May be required for traffic between late Golgi and early endosomes. This chain is Protein MON2 homolog, found in Caenorhabditis briggsae.